Consider the following 1905-residue polypeptide: Transport and Golgi organization protein 1 homolog (1905 aa).

The N-terminal stretch at 1–22 is a signal peptide; sequence MAAAQGLLFWLLLLGPPCRVPG. Residues 23–1141 lie on the Lumenal side of the membrane; the sequence is QPEQDPGRRF…EPASVTPLEN (1119 aa). The region spanning 45–107 is the SH3 domain; the sequence is MLMYRGEALE…PKDLIQVVHE (63 aa). A compositionally biased stretch (basic and acidic residues) spans 154-167; it reads SEKVKEKTAQRVEE. Disordered stretches follow at residues 154–259 and 313–621; these read SEKV…HEQE and TVGK…IKDR. N-linked (GlcNAc...) asparagine glycosylation is present at asparagine 173. Positions 173-190 are enriched in acidic residues; sequence NESDAEPEPGEPNSEESE. The segment covering 198–208 has biased composition (basic and acidic residues); it reads AELRERSEAQK. Over residues 209-220 the composition is skewed to polar residues; the sequence is SHPQVNSQTGHA. 2 positions are modified to phosphoserine: serine 226 and serine 229. Residues 234–245 show a composition bias toward basic and acidic residues; that stretch reads LQDKLKVPDSEN. N-linked (GlcNAc...) asparagine glycosylation occurs at asparagine 246. Over residues 246–255 the composition is skewed to polar residues; it reads NKTSNSSQVS. Acidic residues predominate over residues 317-327; it reads EEEENKEDFDE. Basic and acidic residues-rich tracts occupy residues 337–366 and 373–386; these read EDTK…KVEE and KKGD…REDT. A compositionally biased stretch (acidic residues) spans 392–414; sequence MEGEENTDTDLESSDSKEEDDPL. Composition is skewed to basic and acidic residues over residues 419-436 and 459-480; these read RLGK…KAAD and HMKD…HEVG. Positions 467 to 527 form a coiled coil; the sequence is VEEPRRDWVQ…ANQENDLKGA (61 aa). Residues 488 to 500 show a composition bias toward polar residues; the sequence is DQAVQGSSQSGHL. The segment covering 531–542 has biased composition (basic and acidic residues); that stretch reads ISKEMLHEEKPS. Asparagine 627 carries N-linked (GlcNAc...) asparagine glycosylation. Disordered stretches follow at residues 657–908, 1036–1059, and 1085–1118; these read QQGG…PHAP, APPA…QPPL, and PVTR…TPVD. Residues 669–714 show a composition bias toward basic and acidic residues; that stretch reads VSEKRELPEEEVTRVTKDASDEGQEVRKTGQTDSIEGRGFRPKEPN. Residues 715-730 show a composition bias toward acidic residues; the sequence is PEDEDYSPEELLEDEN. Composition is skewed to basic and acidic residues over residues 736–751, 766–789, 842–859, and 868–884; these read QSKE…RLDV, TDPE…KNET, SQKK…EGHP, and PGVE…EKFV. At serine 873 the chain carries Phosphoserine. Residues 1142-1162 lie within the membrane without spanning it; the sequence is AIAFIYSLVFHLTKTLLATLP. Residues 1163 to 1173 are Lumenal-facing; sequence DDVQPGPDFYG. Residues 1174–1194 traverse the membrane as a helical segment; the sequence is LPWKPVLITASLGIVSFAVFF. The Cytoplasmic portion of the chain corresponds to 1195–1905; it reads WRTVLAVKSR…DCSPALKQSP (711 aa). The interval 1208-1647 is mediates interaction with MIA2; sequence VTEQQISEKL…VIVKPMPGRP (440 aa). Positions 1211–1393 form a coiled coil; that stretch reads QQISEKLKNI…SQKDLEVALT (183 aa). The segment at 1416-1443 is disordered; the sequence is SESEDQNKGGSESDELANGEVGGDRSEK. Serine 1428 is subject to Phosphoserine. Positions 1484–1636 form a coiled coil; the sequence is NLEDQIKKLE…TQKMAMMQEE (153 aa). The segment at 1639–1905 is disordered; it reads IVKPMPGRPN…DCSPALKQSP (267 aa). The span at 1647–1664 shows a compositional bias: polar residues; that stretch reads PNTQNPPRRGPLSQNGSF. Phosphoserine is present on residues serine 1663, serine 1675, serine 1703, serine 1724, serine 1738, and serine 1742. Positions 1748-1905 are proline-rich domain (PRD); mediates interaction with the COPII coat subunits SEC23A and SEC23B; the sequence is DEGKVSMAAK…DCSPALKQSP (158 aa). Residues 1776 to 1806 are compositionally biased toward pro residues; that stretch reads LLPPIRYGPPPQLCGPFGPRPLPPPFGPGMR. Arginine 1781 bears the Asymmetric dimethylarginine mark. The interval 1785 to 1845 is SEC16A-interacting region (SIR); required for its localization to endoplasmic reticulum exit sites and for its interaction with SEC16A; sequence PPQLCGPFGP…GHAPFRPLGS (61 aa). Basic and acidic residues predominate over residues 1821–1831; the sequence is GKRDLPLDPRE. A phosphoserine mark is found at serine 1890 and serine 1904. A compositionally biased stretch (polar residues) spans 1891–1905; that stretch reads QGASQDCSPALKQSP.

Belongs to the MIA/OTOR family. Tango1 subfamily. In terms of assembly, interacts with MIA2. Interacts (via SH3 domain) with COL7A1. Interacts with the COPII coat subunits SEC23A, SEC23B and maybe SEC24C. May interact with APOB and MIA2. Interacts with SEC16A.

Its subcellular location is the endoplasmic reticulum membrane. In terms of biological role, plays a role in the transport of cargos that are too large to fit into COPII-coated vesicles and require specific mechanisms to be incorporated into membrane-bound carriers and exported from the endoplasmic reticulum. This protein is required for collagen VII (COL7A1) secretion by loading COL7A1 into transport carriers. It may participate in cargo loading of COL7A1 at endoplasmic reticulum exit sites by binding to COPII coat subunits Sec23/24 and guiding SH3-bound COL7A1 into a growing carrier. Does not play a role in global protein secretion and is apparently specific to COL7A1 cargo loading. However, it may participate in secretion of other proteins in cells that do not secrete COL7A1. It is also specifically required for the secretion of lipoproteins by participating in their export from the endoplasmic reticulum. Required for correct assembly of COPII coat components at endoplasmic reticulum exit sites (ERES) and for the localization of SEC16A and membrane-bound ER-resident complexes consisting of MIA2 and PREB/SEC12 to ERES. The sequence is that of Transport and Golgi organization protein 1 homolog from Bos taurus (Bovine).